The following is a 594-amino-acid chain: Aspartate--tRNA(Asp/Asn) ligase (594 aa).

E175 is a binding site for L-aspartate. The aspartate stretch occupies residues 199–202 (QQFK). L-aspartate contacts are provided by R221 and H455. 221–223 (RDE) is a binding site for ATP. E489 provides a ligand contact to ATP. R496 provides a ligand contact to L-aspartate. 541 to 544 (GIDR) provides a ligand contact to ATP.

It belongs to the class-II aminoacyl-tRNA synthetase family. Type 1 subfamily. As to quaternary structure, homodimer.

The protein resides in the cytoplasm. It catalyses the reaction tRNA(Asx) + L-aspartate + ATP = L-aspartyl-tRNA(Asx) + AMP + diphosphate. Its function is as follows. Aspartyl-tRNA synthetase with relaxed tRNA specificity since it is able to aspartylate not only its cognate tRNA(Asp) but also tRNA(Asn). Reaction proceeds in two steps: L-aspartate is first activated by ATP to form Asp-AMP and then transferred to the acceptor end of tRNA(Asp/Asn). This Pelagibacter ubique (strain HTCC1062) protein is Aspartate--tRNA(Asp/Asn) ligase.